A 230-amino-acid chain; its full sequence is Urease accessory protein UreE (230 aa).

2 stretches are compositionally biased toward basic and acidic residues: residues 182–193 (HVHVDSPLDEPH) and 204–230 (SHGD…DHKH). The segment at 182–230 (HVHVDSPLDEPHGSGLHVHAIHSHGDGHSHSHSHDHDHDHRHDDHDHKH) is disordered.

It belongs to the UreE family.

It is found in the cytoplasm. Involved in urease metallocenter assembly. Binds nickel. Probably functions as a nickel donor during metallocenter assembly. This chain is Urease accessory protein UreE, found in Yersinia mollaretii.